Here is a 339-residue protein sequence, read N- to C-terminus: MTLRVAINGFGRIGRNVVRALYESGRRAEISVVAINELADAAGMAHLLKYDTSHGRFAWDVRQEGEQLWIGNDVIRLLHERDINALPWKALDVDVVLDCTGVYGSRADGIAHLEAGARKVLFSHPGGNDLDATVVYGVNEEELRAEHRIVSNASCTTNCIIPIIKLMDDAFGIESGTVTTIHSAMHDQQVIDAYHPDLRRTRAASQSIIPVDTRLAAGITRIFPKFHDRFEAIAVRVPTINVTAIDLSVTVQKPVKAYEVNLLLQKAAQGAFHGIVDYTELPLVSTDFNHDPHSAIVDGTQTRVSGAHLIKTLVWCDNEWGFANRMLDTTLAMAAIGFR.

Residues 12-13 (RI) and R81 contribute to the NAD(+) site. Substrate is bound by residues 154-156 (SCT), R200, 213-214 (TR), and R236. The Nucleophile role is filled by C155. Residue N318 participates in NAD(+) binding.

It belongs to the glyceraldehyde-3-phosphate dehydrogenase family. Epd subfamily. Homotetramer.

The protein localises to the cytoplasm. It catalyses the reaction D-erythrose 4-phosphate + NAD(+) + H2O = 4-phospho-D-erythronate + NADH + 2 H(+). It participates in cofactor biosynthesis; pyridoxine 5'-phosphate biosynthesis; pyridoxine 5'-phosphate from D-erythrose 4-phosphate: step 1/5. Functionally, catalyzes the NAD-dependent conversion of D-erythrose 4-phosphate to 4-phosphoerythronate. The polypeptide is D-erythrose-4-phosphate dehydrogenase (Cronobacter sakazakii (strain ATCC BAA-894) (Enterobacter sakazakii)).